We begin with the raw amino-acid sequence, 197 residues long: Pinin homolog 1 (197 aa).

The disordered stretch occupies residues 30–73 (LDGKVNNEDSHMEIDQPEGSMEEDDHRQVKEKNTSENSVEQKRG). Basic and acidic residues-rich tracts occupy residues 34–43 (VNNEDSHMEI) and 53–71 (DDHR…VEQK).

The protein belongs to the pinin family.

The protein localises to the nucleus. It localises to the cytoplasm. Transcriptional activator that may participate in the regulation of mRNA splicing. This chain is Pinin homolog 1 (pnn1), found in Schizosaccharomyces pombe (strain 972 / ATCC 24843) (Fission yeast).